The following is a 160-amino-acid chain: Salivary gland broad-spectrum antiviral protein (160 aa).

Residues 17–37 (VALGLYFTVVVFVLFITSVNL) traverse the membrane as a helical segment. Residues Asn-62 and Asn-145 are each glycosylated (N-linked (GlcNAc...) asparagine).

As to expression, salivary gland (at protein level).

It localises to the membrane. Its function is as follows. (Microbial infection) Modulates replication of Zika virus in salivary glands. (Microbial infection) Modulates replication of dengue virus type 2 in salivary glands. Functionally, (Microbial infection) Modulates replication of chikungunya virus in salivary glands. This Aedes aegypti (Yellowfever mosquito) protein is Salivary gland broad-spectrum antiviral protein.